The chain runs to 255 residues: Small ribosomal subunit protein eS1 (255 aa).

A2 is subject to N-acetylalanine; partial.

It belongs to the eukaryotic ribosomal protein eS1 family. Component of the small ribosomal subunit. Mature ribosomes consist of a small (40S) and a large (60S) subunit. The 40S subunit contains about 33 different proteins and 1 molecule of RNA (18S). The 60S subunit contains about 49 different proteins and 3 molecules of RNA (25S, 5.8S and 5S).

Its subcellular location is the cytoplasm. This chain is Small ribosomal subunit protein eS1, found in Vanderwaltozyma polyspora (strain ATCC 22028 / DSM 70294 / BCRC 21397 / CBS 2163 / NBRC 10782 / NRRL Y-8283 / UCD 57-17) (Kluyveromyces polysporus).